A 250-amino-acid polypeptide reads, in one-letter code: tRNA (guanine-N(1)-)-methyltransferase (250 aa).

Residues Gly116 and 136–141 each bind S-adenosyl-L-methionine; that span reads IGDYVL.

Belongs to the RNA methyltransferase TrmD family. Homodimer.

The protein resides in the cytoplasm. The enzyme catalyses guanosine(37) in tRNA + S-adenosyl-L-methionine = N(1)-methylguanosine(37) in tRNA + S-adenosyl-L-homocysteine + H(+). Specifically methylates guanosine-37 in various tRNAs. The chain is tRNA (guanine-N(1)-)-methyltransferase from Pseudomonas savastanoi pv. phaseolicola (strain 1448A / Race 6) (Pseudomonas syringae pv. phaseolicola (strain 1448A / Race 6)).